The primary structure comprises 54 residues: Large ribosomal subunit protein bL32c (54 aa).

A compositionally biased stretch (basic residues) spans 1 to 20; sequence MAVPKKRVSKSKRDMRKTTW. Residues 1–54 form a disordered region; that stretch reads MAVPKKRVSKSKRDMRKTTWKNKASKEAKKALSLAKSVSTGKSKSKGFQIKSSN. A compositionally biased stretch (low complexity) spans 31–42; the sequence is ALSLAKSVSTGK.

It belongs to the bacterial ribosomal protein bL32 family.

It is found in the plastid. The protein resides in the chloroplast. This is Large ribosomal subunit protein bL32c from Chlorokybus atmophyticus (Soil alga).